The following is a 271-amino-acid chain: Large ribosomal subunit protein uL18 (271 aa).

Basic and acidic residues predominate over residues 245–264 (IRENPCPPKKERTKPADAKR). Residues 245–271 (IRENPCPPKKERTKPADAKRWSPQAHL) are disordered.

The protein belongs to the universal ribosomal protein uL18 family. As to quaternary structure, component of the large ribosomal subunit (LSU).

It is found in the cytoplasm. The protein localises to the nucleus. Component of the ribosome, a large ribonucleoprotein complex responsible for the synthesis of proteins in the cell. The small ribosomal subunit (SSU) binds messenger RNAs (mRNAs) and translates the encoded message by selecting cognate aminoacyl-transfer RNA (tRNA) molecules. The large subunit (LSU) contains the ribosomal catalytic site termed the peptidyl transferase center (PTC), which catalyzes the formation of peptide bonds, thereby polymerizing the amino acids delivered by tRNAs into a polypeptide chain. The nascent polypeptides leave the ribosome through a tunnel in the LSU and interact with protein factors that function in enzymatic processing, targeting, and the membrane insertion of nascent chains at the exit of the ribosomal tunnel. The chain is Large ribosomal subunit protein uL18 (RPL5) from Dunaliella salina (Green alga).